A 359-amino-acid polypeptide reads, in one-letter code: 3-dehydroquinate synthase (359 aa).

Residues Asp-71–Lys-76, Gly-105–Asp-109, Thr-129–Thr-130, Lys-142, and Lys-151 each bind NAD(+). Zn(2+) is bound by residues Glu-184, His-247, and His-264.

Belongs to the sugar phosphate cyclases superfamily. Dehydroquinate synthase family. NAD(+) serves as cofactor. Co(2+) is required as a cofactor. The cofactor is Zn(2+).

Its subcellular location is the cytoplasm. It catalyses the reaction 7-phospho-2-dehydro-3-deoxy-D-arabino-heptonate = 3-dehydroquinate + phosphate. Its pathway is metabolic intermediate biosynthesis; chorismate biosynthesis; chorismate from D-erythrose 4-phosphate and phosphoenolpyruvate: step 2/7. In terms of biological role, catalyzes the conversion of 3-deoxy-D-arabino-heptulosonate 7-phosphate (DAHP) to dehydroquinate (DHQ). This chain is 3-dehydroquinate synthase, found in Chromobacterium violaceum (strain ATCC 12472 / DSM 30191 / JCM 1249 / CCUG 213 / NBRC 12614 / NCIMB 9131 / NCTC 9757 / MK).